The primary structure comprises 40 residues: uncharacterized protein (40 aa).

The signal sequence occupies residues 1–27; sequence MFPADVILQCFGFSVGIALVGYVISLF.

This is an uncharacterized protein from Archaeoglobus fulgidus (strain ATCC 49558 / DSM 4304 / JCM 9628 / NBRC 100126 / VC-16).